The sequence spans 418 residues: Serine/threonine transporter SstT (418 aa).

Helical transmembrane passes span 16–36 (SLVS…TLIP), 45–65 (LGTL…LLLV), 83–103 (LLIL…VASF), 142–162 (ALLE…GLSL), 192–212 (PLGI…SALL), 218–238 (LIVL…LIVF), 289–309 (VSIP…ITVL), 317–337 (LGIS…TISA), and 364–384 (VAMQ…SAET).

The protein belongs to the dicarboxylate/amino acid:cation symporter (DAACS) (TC 2.A.23) family.

Its subcellular location is the cell inner membrane. The catalysed reaction is L-serine(in) + Na(+)(in) = L-serine(out) + Na(+)(out). It carries out the reaction L-threonine(in) + Na(+)(in) = L-threonine(out) + Na(+)(out). Functionally, involved in the import of serine and threonine into the cell, with the concomitant import of sodium (symport system). This Tolumonas auensis (strain DSM 9187 / NBRC 110442 / TA 4) protein is Serine/threonine transporter SstT.